Here is a 326-residue protein sequence, read N- to C-terminus: DNA-directed RNA polymerase subunit alpha (326 aa).

The segment at 1–231 (MQTALLKPKI…DQLSVFAALE (231 aa)) is alpha N-terminal domain (alpha-NTD). The segment at 247 to 326 (IDPILLRPVD…ENWPPAGLEK (80 aa)) is alpha C-terminal domain (alpha-CTD).

Belongs to the RNA polymerase alpha chain family. As to quaternary structure, homodimer. The RNAP catalytic core consists of 2 alpha, 1 beta, 1 beta' and 1 omega subunit. When a sigma factor is associated with the core the holoenzyme is formed, which can initiate transcription.

It carries out the reaction RNA(n) + a ribonucleoside 5'-triphosphate = RNA(n+1) + diphosphate. Its function is as follows. DNA-dependent RNA polymerase catalyzes the transcription of DNA into RNA using the four ribonucleoside triphosphates as substrates. In Cupriavidus necator (strain ATCC 17699 / DSM 428 / KCTC 22496 / NCIMB 10442 / H16 / Stanier 337) (Ralstonia eutropha), this protein is DNA-directed RNA polymerase subunit alpha.